An 80-amino-acid polypeptide reads, in one-letter code: uncharacterized protein (80 aa).

Residues 1–15 (MVKLSFTLRFGDVWV) form the signal peptide.

This is an uncharacterized protein from Archaeoglobus fulgidus (strain ATCC 49558 / DSM 4304 / JCM 9628 / NBRC 100126 / VC-16).